A 161-amino-acid polypeptide reads, in one-letter code: Ribosome maturation factor RimP (161 aa).

Belongs to the RimP family.

It is found in the cytoplasm. In terms of biological role, required for maturation of 30S ribosomal subunits. In Herminiimonas arsenicoxydans, this protein is Ribosome maturation factor RimP.